The following is a 186-amino-acid chain: uncharacterized protein (186 aa).

This is an uncharacterized protein from Acanthamoeba polyphaga (Amoeba).